The following is a 38-amino-acid chain: Augerpeptide hhe53 (38 aa).

Contains 2 disulfide bonds. As to expression, expressed by the venom duct.

It is found in the secreted. This is Augerpeptide hhe53 from Hastula hectica (Sea snail).